The primary structure comprises 518 residues: 12S seed storage globulin 1 (518 aa).

The signal sequence occupies residues 1-24 (MATTRFPSLLFYSCIFLLCNGSMA). 2 disulfide bridges follow: C45–C78 and C121–C324. Residues 50-240 (LQAFEPLRQV…ALGISQQAAQ (191 aa)) form the Cupin type-1 1 domain. The segment covering 281–295 (QSQQEQSTQYQVGQS) has biased composition (low complexity). The tract at residues 281–311 (QSQQEQSTQYQVGQSPQYQEGQSTQYQSGQS) is disordered. Over residues 296 to 311 (PQYQEGQSTQYQSGQS) the composition is skewed to polar residues. Residues 330–479 (QNIENPKRAD…AYRISRQESQ (150 aa)) enclose the Cupin type-1 2 domain. Positions 496-518 (FAQTGSQSYQDEGESSSTEKASE) are disordered.

Belongs to the 11S seed storage protein (globulins) family. As to quaternary structure, hexamer; each subunit is composed of an acidic and a basic chain derived from a single precursor and linked by a disulfide bond.

Functionally, this is a seed storage protein. The chain is 12S seed storage globulin 1 from Avena sativa (Oat).